Here is a 629-residue protein sequence, read N- to C-terminus: Hemocyanin F chain (629 aa).

Cu cation-binding residues include His172, His176, His203, His324, His328, and His364. N-linked (GlcNAc...) asparagine glycans are attached at residues Asn395 and Asn447. Positions 503 to 513 are enriched in polar residues; sequence SESSVTVSHTP. Residues 503-522 are disordered; sequence SESSVTVSHTPTFEELQRGE. An N-linked (GlcNAc...) asparagine glycan is attached at Asn527. Cys534 and Cys582 form a disulfide bridge. Residue Asn615 is glycosylated (N-linked (GlcNAc...) asparagine).

Belongs to the tyrosinase family. Hemocyanin subfamily. Tarantula hemocyanin is a 24-chain polymer with seven different chains identified. In terms of tissue distribution, hemolymph.

The protein localises to the secreted. It is found in the extracellular space. Functionally, hemocyanins are copper-containing oxygen carriers occurring freely dissolved in the hemolymph of many mollusks and arthropods. The chain is Hemocyanin F chain (HCF) from Aphonopelma sp. (American tarantula).